The primary structure comprises 402 residues: Multidrug resistance protein MdtH (402 aa).

The Cytoplasmic segment spans residues 1–12 (MSRVSQARNLGK). The helical transmembrane segment at 13–33 (YFLLIDNMLVVLGFFVVFPLI) threads the bilayer. Residues 34-98 (SIRFVDQMGW…GFATMGIAHE (65 aa)) lie on the Periplasmic side of the membrane. A helical membrane pass occupies residues 99–116 (PWLLWFSCFLSGLGGTLF). At 117-138 (DPPRSALVVKLIRPEQRGRFFS) the chain is on the cytoplasmic side. Residues 139–159 (LLMMQDSAGAVIGALLGSWLL) form a helical membrane-spanning segment. The Periplasmic segment spans residues 160–164 (QYDFR). Residues 165–185 (LVCATGAILFILCALFNAWLL) form a helical membrane-spanning segment. Over 186 to 213 (PAWKLSTVRTPVREGMRRVMSDKRFVTY) the chain is Cytoplasmic. Residues 214 to 234 (VLTLAGYYMLAVQVMLMLPIM) traverse the membrane as a helical segment. Residues 235 to 243 (VNDIAGSPA) are Periplasmic-facing. The helical transmembrane segment at 244-264 (AVKWMYAIEACLSLTLLYPIA) threads the bilayer. At 265-276 (RWSEKRFRLEHR) the chain is on the cytoplasmic side. The helical transmembrane segment at 277–297 (LMAGLLVMSLSMLPIGMVGNL) threads the bilayer. The Periplasmic segment spans residues 298-299 (QQ). A helical transmembrane segment spans residues 300–320 (LFTLICAFYIGSVIAEPARET). Topologically, residues 321–339 (LSASLADARARGSYMGFSR) are cytoplasmic. Residues 340-360 (LGLAIGGAIGYIGGGWLFDMG) form a helical membrane-spanning segment. Residues 361–367 (KALAQPE) are Periplasmic-facing. The chain crosses the membrane as a helical span at residues 368-388 (LPWMMLGIIGFITFLALGWQF). Residues 389 to 402 (SHKRTPRRMLEPGA) lie on the Cytoplasmic side of the membrane.

The protein belongs to the major facilitator superfamily. DHA1 family. MdtH (TC 2.A.1.2.21) subfamily.

It localises to the cell inner membrane. This Salmonella agona (strain SL483) protein is Multidrug resistance protein MdtH.